The primary structure comprises 382 residues: Apolipoprotein A-IV (382 aa).

The signal sequence occupies residues 1–20; the sequence is MFLKAVVLSLALVAVTGARA. 13 consecutive repeat copies span residues 33–54, 60–81, 82–103, 115–136, 137–158, 159–180, 181–202, 203–224, 225–246, 247–268, 269–286, 287–308, and 309–330. The interval 33 to 330 is 13 X 22 AA approximate tandem repeats; the sequence is DYFSQLGSNA…QVEDLRQKLG (298 aa). Positions 361–382 are disordered; sequence EASQGQSQALPAQEKAQAPLEG.

The protein belongs to the apolipoprotein A1/A4/E family. As to quaternary structure, homodimer. Secreted in plasma.

The protein localises to the secreted. Functionally, may have a role in chylomicrons and VLDL secretion and catabolism. Required for efficient activation of lipoprotein lipase by ApoC-II; potent activator of LCAT. Apoa-IV is a major component of HDL and chylomicrons. This chain is Apolipoprotein A-IV (APOA4), found in Sus scrofa (Pig).